A 325-amino-acid polypeptide reads, in one-letter code: Probable tRNA-dihydrouridine synthase 2 (325 aa).

18–20 serves as a coordination point for FMN; it reads PME. The Proton donor role is filled by Cys-105. Residues Lys-143, 208–210, and 232–233 contribute to the FMN site; these read NGD and GR.

Belongs to the Dus family. Requires FMN as cofactor.

It carries out the reaction a 5,6-dihydrouridine in tRNA + NAD(+) = a uridine in tRNA + NADH + H(+). The enzyme catalyses a 5,6-dihydrouridine in tRNA + NADP(+) = a uridine in tRNA + NADPH + H(+). In terms of biological role, catalyzes the synthesis of 5,6-dihydrouridine (D), a modified base found in the D-loop of most tRNAs, via the reduction of the C5-C6 double bond in target uridines. The sequence is that of Probable tRNA-dihydrouridine synthase 2 (dus2) from Bacillus subtilis (strain 168).